The chain runs to 258 residues: DNA repair protein RecO (258 aa).

The protein belongs to the RecO family.

Its function is as follows. Involved in DNA repair and RecF pathway recombination. This Lactiplantibacillus plantarum (strain ATCC BAA-793 / NCIMB 8826 / WCFS1) (Lactobacillus plantarum) protein is DNA repair protein RecO.